Reading from the N-terminus, the 244-residue chain is Flavin-dependent thymidylate synthase (244 aa).

A ThyX domain is found at 7 to 199 (PRVFLIASWG…PNLARLVWED (193 aa)). FAD-binding positions include Ser-60 and 83–85 (RHR). DUMP contacts are provided by residues 80–83 (QFIR), 93–95 (SQR), and Arg-137. The ThyX motif signature appears at 83 to 93 (RHRMASYWSES). Residues 153 to 155 (NAR) and Asn-160 contribute to the FAD site. Position 165 (Arg-165) interacts with dUMP. Arg-165 functions as the Involved in ionization of N3 of dUMP, leading to its activation in the catalytic mechanism.

It belongs to the thymidylate synthase ThyX family. Homotetramer. FAD is required as a cofactor.

It catalyses the reaction dUMP + (6R)-5,10-methylene-5,6,7,8-tetrahydrofolate + NADPH + H(+) = dTMP + (6S)-5,6,7,8-tetrahydrofolate + NADP(+). It functions in the pathway pyrimidine metabolism; dTTP biosynthesis. Its function is as follows. Catalyzes the reductive methylation of 2'-deoxyuridine-5'-monophosphate (dUMP) to 2'-deoxythymidine-5'-monophosphate (dTMP) while utilizing 5,10-methylenetetrahydrofolate (mTHF) as the methyl donor, and NADPH and FADH(2) as the reductant. This Pyrobaculum aerophilum (strain ATCC 51768 / DSM 7523 / JCM 9630 / CIP 104966 / NBRC 100827 / IM2) protein is Flavin-dependent thymidylate synthase.